We begin with the raw amino-acid sequence, 601 residues long: uncharacterized protein (601 aa).

Residues 24–35 (RKSNVVLKKNKG) are compositionally biased toward basic residues. Disordered regions lie at residues 24–106 (RKSN…LKLD) and 171–219 (YGND…PREE). Residues 54–81 (SQFSSRDNFRTTQTQASSSSEPSDNTNR) are compositionally biased toward polar residues. The segment covering 92-106 (TPKKEESNAEKLKLD) has biased composition (basic and acidic residues). Phosphoserine occurs at positions 236 and 238. The interval 260-283 (RKRKVLSSSSEDDESSSPEDLLKP) is disordered.

It localises to the nucleus. This is an uncharacterized protein from Schizosaccharomyces pombe (strain 972 / ATCC 24843) (Fission yeast).